Here is a 117-residue protein sequence, read N- to C-terminus: Large ribosomal subunit protein uL18 (117 aa).

The protein belongs to the universal ribosomal protein uL18 family. In terms of assembly, part of the 50S ribosomal subunit; part of the 5S rRNA/L5/L18/L25 subcomplex. Contacts the 5S and 23S rRNAs.

This is one of the proteins that bind and probably mediate the attachment of the 5S RNA into the large ribosomal subunit, where it forms part of the central protuberance. The chain is Large ribosomal subunit protein uL18 from Pasteurella multocida (strain Pm70).